The chain runs to 162 residues: MVDPNLVTFVLTIVNILVLFYLLKRFLFKPIGEFMENRKNEIKQNLEDAEKERQEAEKLKEQYYEKLRGAKSEAQEIIQQARQREEEIIKEAKQEAKQEADDMIARAREEINQEQKKAIESLRSEVSDLTIQITERVLNDTIDKDQQKKLVQKYLKEVGRVS.

Residues 6-28 traverse the membrane as a helical segment; that stretch reads LVTFVLTIVNILVLFYLLKRFLF.

Belongs to the ATPase B chain family. In terms of assembly, F-type ATPases have 2 components, F(1) - the catalytic core - and F(0) - the membrane proton channel. F(1) has five subunits: alpha(3), beta(3), gamma(1), delta(1), epsilon(1). F(0) has three main subunits: a(1), b(2) and c(10-14). The alpha and beta chains form an alternating ring which encloses part of the gamma chain. F(1) is attached to F(0) by a central stalk formed by the gamma and epsilon chains, while a peripheral stalk is formed by the delta and b chains.

It localises to the cell membrane. Its function is as follows. F(1)F(0) ATP synthase produces ATP from ADP in the presence of a proton or sodium gradient. F-type ATPases consist of two structural domains, F(1) containing the extramembraneous catalytic core and F(0) containing the membrane proton channel, linked together by a central stalk and a peripheral stalk. During catalysis, ATP synthesis in the catalytic domain of F(1) is coupled via a rotary mechanism of the central stalk subunits to proton translocation. Component of the F(0) channel, it forms part of the peripheral stalk, linking F(1) to F(0). The chain is ATP synthase subunit b from Natranaerobius thermophilus (strain ATCC BAA-1301 / DSM 18059 / JW/NM-WN-LF).